The following is a 154-amino-acid chain: RING finger protein 11 (154 aa).

The segment covering 1 to 12 (MGNCLKSPTSDD) has biased composition (polar residues). The tract at residues 1-52 (MGNCLKSPTSDDISLLHESQSDRASFGEGTEPDQEPPPPYQEQVPVPIYHPT) is disordered. Residue G2 is the site of N-myristoyl glycine attachment. C4 is lipidated: S-palmitoyl cysteine. A phosphoserine mark is found at S14 and S25. The PPxY motif motif lies at 37 to 40 (PPPY). The RING-type zinc finger occupies 99–140 (CVICMMDFVYGDPIRFLPCMHIYHLDCIDDWLMRSFTCPSCM). A Phosphothreonine; by PKB/AKT1 modification is found at T135.

As to quaternary structure, interacts (when phosphorylated) with 14-3-3. Interacts with the E3 ubiquitin-ligases NEDD4, ITCH, SMURF2 and WWP1. Also interacts with the E2 ubiquitin-conjugating enzymes UBE2D1 and UBE2N, but neither with CDC34, nor with UBE2L3. Interacts with ZNF350, EPS15 and STAMBP. After TNF stimulation, interacts with TAX1BP1, TNFAIP3 and RIPK1; these interactions are transient and they are lost after 1 hour of stimulation with TNF. Interacts with GGA1. In terms of processing, ubiquitinated in the presence of ITCH, SMURF2 and UBE2D1, as well as WWP1. Phosphorylation by PKB/AKT1 may accelerate degradation by the proteasome. Post-translationally, acylation at both Gly-2 and Cys-4 is required for proper localization to the endosomes.

Its subcellular location is the early endosome. The protein resides in the recycling endosome. It localises to the cytoplasm. It is found in the nucleus. In terms of biological role, essential component of a ubiquitin-editing protein complex, comprising also TNFAIP3, ITCH and TAX1BP1, that ensures the transient nature of inflammatory signaling pathways. Promotes the association of TNFAIP3 to RIPK1 after TNF stimulation. TNFAIP3 deubiquitinates 'Lys-63' polyubiquitin chains on RIPK1 and catalyzes the formation of 'Lys-48'-polyubiquitin chains. This leads to RIPK1 proteasomal degradation and consequently termination of the TNF- or LPS-mediated activation of NF-kappa-B. Recruits STAMBP to the E3 ubiquitin-ligase SMURF2 for ubiquitination, leading to its degradation by the 26S proteasome. The protein is RING finger protein 11 (Rnf11) of Mus musculus (Mouse).